The chain runs to 372 residues: MNLEEENTIFKPLYSLKHSPINAYFSKNSDDFVVRERPLYEFSGKGEHLILHINKKDLTTNEALKILSETSGVKIRDFGYAGFKDKQGSTFQYLSMPKKFESFLSNFSHPKLKILETFIHENKLRIGHLKGNTFFIRLKKVLPSDALKLEQALMNLDKQGFTNYFGYQRFGKFGDNYKEGLEILRGKKMKNVKMKEFLISAFQSELFNRYLSKRVELSHFANDFSEKELIQIYKISKEEAKELKKQEQFFKLLKGEVLGHYPFGKCFLCEDLSAELGRFKARDISAMGLLIGAKAYETGEGLALNLENEIFKDTLEFKAKMQGSRRFMWGYLEELKWRYDEEKAHFCIEFFLQKGSYATVVLEEILHKNLFE.

The Nucleophile role is filled by D85. The TRUD domain occupies 160–330 (GFTNYFGYQR…MQGSRRFMWG (171 aa)).

The protein belongs to the pseudouridine synthase TruD family.

It catalyses the reaction uridine(13) in tRNA = pseudouridine(13) in tRNA. Responsible for synthesis of pseudouridine from uracil-13 in transfer RNAs. In Campylobacter jejuni (strain RM1221), this protein is tRNA pseudouridine synthase D.